The primary structure comprises 113 residues: Putative single-stranded DNA-binding protein ycf41 (113 aa).

The region spanning 1-101 (MNYASFIIKI…EVSGFKIYPF (101 aa)) is the SSB domain.

It is found in the plastid. It localises to the chloroplast. In Trieres chinensis (Marine centric diatom), this protein is Putative single-stranded DNA-binding protein ycf41 (ycf41).